We begin with the raw amino-acid sequence, 630 residues long: Chaperone protein HtpG (630 aa).

The segment at 1–327 (MSVETYKFDA…SEDLSLNISR (327 aa)) is a; substrate-binding. Residues 328–551 (ETLQHSPLID…EGSMDIRTER (224 aa)) form a b region. Over residues 483-499 (TKTAKSSDTNNDGKDDT) the composition is skewed to basic and acidic residues. The segment at 483-504 (TKTAKSSDTNNDGKDDTSSSDD) is disordered. A c region spans residues 552-630 (FLIEQKQLSS…INFFIEKSVN (79 aa)).

Belongs to the heat shock protein 90 family. In terms of assembly, homodimer.

It is found in the cytoplasm. Its function is as follows. Molecular chaperone. Has ATPase activity. The sequence is that of Chaperone protein HtpG from Orientia tsutsugamushi (strain Boryong) (Rickettsia tsutsugamushi).